Here is a 310-residue protein sequence, read N- to C-terminus: MRLVVSSCLLVAAPFLSSLLRVSLATVVLNSISASFADLPAKFDGSVTKNGICGALYVADPLDGCSPLLHAAASNWTQHRTTKFALIIRGECSFEDKLLNAQNSGFQAVIVYDNIDNEDLIVMKVNPQDITVDAVFVSNVAGEILRKYARGRDGECCLNPPDRGSAWTVLAISFFSLLLIVTFLLIAFFAPRHWTQWRGRHTRTIRLDAKLVHTLPCFTFTDSAHHKAGETCAICLEDYRFGESLRLLPCQHAFHLNCIDSWLTKWGTSCPVCKHDIRTETMSSEVHKRESPRTDTSTSRFAFAQSSQSR.

A signal peptide spans 1–25 (MRLVVSSCLLVAAPFLSSLLRVSLA). The Lumenal portion of the chain corresponds to 26-168 (TVVLNSISAS…NPPDRGSAWT (143 aa)). Cys-65 and Cys-92 form a disulfide bridge. A glycan (N-linked (GlcNAc...) asparagine) is linked at Asn-75. The 69-residue stretch at 81–149 (TTKFALIIRG…VAGEILRKYA (69 aa)) folds into the PA domain. The helical transmembrane segment at 169–189 (VLAISFFSLLLIVTFLLIAFF) threads the bilayer. Residues 190–310 (APRHWTQWRG…FAFAQSSQSR (121 aa)) are Cytoplasmic-facing. The segment at 232–274 (CAICLEDYRFGESLRLLPCQHAFHLNCIDSWLTKWGTSCPVCK) adopts an RING-type; atypical zinc-finger fold. The span at 284 to 293 (SEVHKRESPR) shows a compositional bias: basic and acidic residues. Positions 284–310 (SEVHKRESPRTDTSTSRFAFAQSSQSR) are disordered. Residues 294–310 (TDTSTSRFAFAQSSQSR) are compositionally biased toward polar residues.

Expressed in leaves, stems, flowers and siliques.

It is found in the prevacuolar compartment membrane. It localises to the protein storage vacuole membrane. The protein localises to the golgi apparatus membrane. In terms of biological role, involved in the trafficking of vacuolar proteins. Functions probably as a sorting receptor for protein trafficking to the protein storage vacuole (PSV) by binding the C-terminal vacuolar sorting determinant (VSD) of vacuolar-sorted proteins. This Arabidopsis thaliana (Mouse-ear cress) protein is Receptor homology region, transmembrane domain- and RING domain-containing protein 1 (RMR1).